The sequence spans 102 residues: Acid shock protein (102 aa).

The N-terminal stretch at 1 to 21 is a signal peptide; it reads MKKVLALVVAAAMGLSSAAFA. A propeptide spanning residues 22-58 is cleaved from the precursor; that stretch reads AETAITPAPTATTTKAAPAKTTHHKKQHKAAPAQKAQ. The span at 26–41 shows a compositional bias: low complexity; it reads ITPAPTATTTKAAPAK. The segment at 26-102 is disordered; that stretch reads ITPAPTATTT…PAKPAAQPAA (77 aa). Over residues 80–90 the composition is skewed to basic residues; sequence AAKKHAKKHSH. Residues 91-102 show a composition bias toward low complexity; it reads QQPAKPAAQPAA.

The protein belongs to the Asr family. In terms of processing, proteolytic processing gives rise to the active protein.

The protein localises to the periplasm. In terms of biological role, required for growth and/or survival at acidic conditions. The sequence is that of Acid shock protein from Escherichia coli O81 (strain ED1a).